Reading from the N-terminus, the 544-residue chain is Chaperonin GroEL (544 aa).

ATP-binding positions include 29-32 (TLGP), 86-90 (DGTTT), G413, 476-478 (NAA), and D492.

Belongs to the chaperonin (HSP60) family. As to quaternary structure, forms a cylinder of 14 subunits composed of two heptameric rings stacked back-to-back. Interacts with the co-chaperonin GroES.

It localises to the cytoplasm. It carries out the reaction ATP + H2O + a folded polypeptide = ADP + phosphate + an unfolded polypeptide.. Functionally, together with its co-chaperonin GroES, plays an essential role in assisting protein folding. The GroEL-GroES system forms a nano-cage that allows encapsulation of the non-native substrate proteins and provides a physical environment optimized to promote and accelerate protein folding. This is Chaperonin GroEL from Bacillus licheniformis (strain ATCC 14580 / DSM 13 / JCM 2505 / CCUG 7422 / NBRC 12200 / NCIMB 9375 / NCTC 10341 / NRRL NRS-1264 / Gibson 46).